A 133-amino-acid chain; its full sequence is UPF0102 protein ABSDF1354 (133 aa).

Belongs to the UPF0102 family.

The polypeptide is UPF0102 protein ABSDF1354 (Acinetobacter baumannii (strain SDF)).